We begin with the raw amino-acid sequence, 294 residues long: MKRQRPQDSMISVPLQNENSTTTPTKEVSHLNFPLKRPRLHSFVPTSKQAALSDITPDTPPAFKTPYSSLPYNLVPQNSSTSKKRPRAEDLLVIEPSQNSLVPSTQNNEWNEIARKRVSLESDHPDKSGQVIDLATGQILDKQTEDIDDDRNKSAVSKSLVRHPHRLKMLPFGIQSAHPYISSLNSNYPTTWHFASHYYPTDSKQLVKYHPTEVHPSWTVEEPVHYNTYDGVVNEPNSSVIIEELDDDYDELNDPMNNNDTPITNSTHSAQMSNLPTHDSMDIDMGGAVPSTST.

3 disordered regions span residues M1–H30, A51–P86, and D250–T294. Composition is skewed to polar residues over residues Q7–K26, P66–T81, and P255–T277.

It localises to the nucleus. This is an uncharacterized protein from Schizosaccharomyces pombe (strain 972 / ATCC 24843) (Fission yeast).